Reading from the N-terminus, the 1464-residue chain is MKKSRKYATLDSDKIAKISLALATPDDVESWSHGEVTKPETINYKSYKPERGGLFDEIIFGPMIDYRCPICGHKYKKINEGSFCSKTELCKQEKVEILPKISRRNHMGHIKLNSPVVHFWFFKVDHSIIFKLLDLTVAGRPNTEPVRRIDLENLIYYKSHIVLESGGIKALPKNLIIDINVAAVIYKDALEELITRFEPGTEDYEDIRETLDNLIEKASSKIGQDYGIDFYELNEVIEHYSEAKIGTGAQAIEYLLKNLDLQKEKELVSAKIKKINDEEIMSGAKIASTSRQTREKLYKRLQVINAFIESKQEPTSMLIYNLPVIPADLRPLIQLDGGRHSTSDINELYRRVIIRNNRLKQWQEKDAPTLVIQNELRMIQEAVDALIDNARRSPNPVLSKDNRPFKSISDALTGKKGRFRQNLLGKRVDYSGRSVIVVGPNLKMHQCGIPREMAAKLFEPWIIHRLIEKEVATTIKNAKKMLEDQNPVIWPHIAEVIKGRLVLLNRAPTLHRLSIQAFEPVLVRGKAIRLHPLVCTPFNADFDGDQMAVHVPISERALLESRELMLANKNILGTKDGEPIINPSQDMILGIYYLTIEEPGALGEGRIFDNYEHMIRAYEAKKVSLHARVALPIEEVKNSKIKAFASRESQRYIISTVGKFIFNNIFPKSFPFIFDNKVTEATSLEQYSEKVNKYIIPAGTNVIEHIKMELPVLDAFNKKNIAKIIRYVFDKYVAALTLQDVAGVIDQLNDVPLSNIVLNYLNLKTYDDRKVDQEHAIILAALTRSATEKTKARSQRHIEGLEVPLNAEEKAEILDDVWFRYTNMVASILDDIKDLGFKYSSLSGITFAISDILETDKKPEYIAEGDAYIAQLKQYYNDGLISDDDRYSLTIKKWTDIKAKVQGELQQIIKENPRNPIITMINSGARGNISNYVQLAGMRGLMANNTKSTRADVKNERVVRSTVEIPVKSSFIEGLTAFEFYSSTHGTRKGATDTALNTAKSGYLTRRLVDVAQNIVVRKENCGSDYGHIVRDIVDTKNGQIIVPLKERIIGRYANKPIIGEKTKQELAKRNTLITDKLAQKIIDEGVKEVEIRSVLGCNTKNGVCKMCFGKDLATNRVVNIGEAVGIIAAQSIGEPGTQLTMRVFHTGGVAGAEDITGGFPRLIELIDAHEQPWGRPAVISPYEGEIVEDLVEDKNVNSHLLTIKVVNSKKETVNKKVHVYTTKKLRVKVGDHVKVGQKLSEGPVIVKELLELTDTITVQNYLLKEIQKIYRIQGIAISDKYIEIIIRQMMSKIVIHDPGDSKFFAGAIVDIFDYQEENATLLSQRKRPAFGKVVIKGAKQVPLLSDSFLAAASYQETSKILVHAAISSRSDSLSGLKENIIVGKKIPAGTALYPFESHSKYDIRPSIDYFRKPELETSDSEFIPVDLESYHQELEDEQQQIIEVDDSDISVEDEENDFYENED.

3 residues coordinate Mg(2+): aspartate 541, aspartate 543, and aspartate 545. 4 residues coordinate Zn(2+): cysteine 1022, cysteine 1098, cysteine 1105, and cysteine 1108. The segment at 1435 to 1464 (LEDEQQQIIEVDDSDISVEDEENDFYENED) is disordered.

The protein belongs to the RNA polymerase beta' chain family. In terms of assembly, the RNAP catalytic core consists of 2 alpha, 1 beta, 1 beta' and 1 omega subunit. When a sigma factor is associated with the core the holoenzyme is formed, which can initiate transcription. The cofactor is Mg(2+). It depends on Zn(2+) as a cofactor.

The catalysed reaction is RNA(n) + a ribonucleoside 5'-triphosphate = RNA(n+1) + diphosphate. Functionally, DNA-dependent RNA polymerase catalyzes the transcription of DNA into RNA using the four ribonucleoside triphosphates as substrates. In Metamycoplasma arthritidis (strain 158L3-1) (Mycoplasma arthritidis), this protein is DNA-directed RNA polymerase subunit beta'.